Reading from the N-terminus, the 239-residue chain is Small ribosomal subunit protein uS5 (239 aa).

The disordered stretch occupies residues 1–62 (MADETEIQAA…DDRRGSEEQG (62 aa)). Low complexity predominate over residues 9 to 19 (AAAPAEAAPGA). Basic and acidic residues predominate over residues 34 to 62 (GGNDRGGDRGRGRDGRGRRDDRRGSEEQG). In terms of domain architecture, S5 DRBM spans 65–128 (LIEKLVHINR…AAAKKAMVRV (64 aa)).

This sequence belongs to the universal ribosomal protein uS5 family. Part of the 30S ribosomal subunit. Contacts proteins S4 and S8.

In terms of biological role, with S4 and S12 plays an important role in translational accuracy. Located at the back of the 30S subunit body where it stabilizes the conformation of the head with respect to the body. The protein is Small ribosomal subunit protein uS5 of Rhizorhabdus wittichii (strain DSM 6014 / CCUG 31198 / JCM 15750 / NBRC 105917 / EY 4224 / RW1) (Sphingomonas wittichii).